The primary structure comprises 392 residues: Tryptophan synthase beta chain (392 aa).

N6-(pyridoxal phosphate)lysine is present on lysine 86.

The protein belongs to the TrpB family. Tetramer of two alpha and two beta chains. Pyridoxal 5'-phosphate is required as a cofactor.

The catalysed reaction is (1S,2R)-1-C-(indol-3-yl)glycerol 3-phosphate + L-serine = D-glyceraldehyde 3-phosphate + L-tryptophan + H2O. It functions in the pathway amino-acid biosynthesis; L-tryptophan biosynthesis; L-tryptophan from chorismate: step 5/5. Its function is as follows. The beta subunit is responsible for the synthesis of L-tryptophan from indole and L-serine. The protein is Tryptophan synthase beta chain of Methanocorpusculum labreanum (strain ATCC 43576 / DSM 4855 / Z).